The sequence spans 1515 residues: Adhesion G protein-coupled receptor L1 (1515 aa).

Positions methionine 1–glycine 24 are cleaved as a signal peptide. The Extracellular portion of the chain corresponds to leucine 25–leucine 857. The SUEL-type lectin domain occupies alanine 40–valine 129. 5 disulfide bridges follow: cysteine 41-cysteine 71, cysteine 50-cysteine 128, cysteine 83-cysteine 115, cysteine 96-cysteine 102, and cysteine 140-cysteine 322. Glutamate 42 lines the alpha-L-rhamnose pocket. An N-linked (GlcNAc...) asparagine glycan is attached at asparagine 98. An alpha-L-rhamnose-binding site is contributed by glycine 117 to lysine 120. Residues valine 139–proline 398 enclose the Olfactomedin-like domain. The disordered stretch occupies residues aspartate 400 to proline 468. The span at proline 405 to threonine 441 shows a compositional bias: low complexity. The segment covering aspartate 453–proline 468 has biased composition (pro residues). Disulfide bonds link cysteine 480-cysteine 515 and cysteine 503-cysteine 532. N-linked (GlcNAc...) asparagine glycans are attached at residues asparagine 531, asparagine 640, asparagine 741, asparagine 800, asparagine 805, and asparagine 826. One can recognise a GAIN-B domain in the interval proline 669–tyrosine 850. Disulfide bonds link cysteine 801-cysteine 832 and cysteine 820-cysteine 834. The segment at cysteine 801 to tyrosine 850 is GPS. A helical transmembrane segment spans residues leucine 858–isoleucine 878. Over serine 879–asparagine 892 the chain is Cytoplasmic. The chain crosses the membrane as a helical span at residues threonine 893–isoleucine 913. At aspartate 914–glutamate 919 the chain is on the extracellular side. Residues valine 920–leucine 940 traverse the membrane as a helical segment. Topologically, residues cysteine 941–tyrosine 964 are cytoplasmic. A helical membrane pass occupies residues tyrosine 965 to tyrosine 985. The Extracellular segment spans residues arginine 986–tyrosine 1001. A helical membrane pass occupies residues phenylalanine 1002–methionine 1022. Residues valine 1023–alanine 1049 lie on the Cytoplasmic side of the membrane. Residues leucine 1050 to isoleucine 1070 form a helical membrane-spanning segment. Over asparagine 1071–serine 1074 the chain is Extracellular. A helical transmembrane segment spans residues valine 1075–phenylalanine 1095. Residues histidine 1096–leucine 1515 are Cytoplasmic-facing. The disordered stretch occupies residues threonine 1144 to threonine 1184. The residue at position 1237 (arginine 1237) is an Omega-N-methylarginine. Serine 1263 is modified (phosphoserine). Disordered stretches follow at residues phenylalanine 1291–asparagine 1316, arginine 1337–alanine 1369, glutamate 1401–proline 1470, and tyrosine 1492–leucine 1515. Composition is skewed to pro residues over residues glycine 1345–proline 1356 and alanine 1449–proline 1461. Phosphoserine is present on residues serine 1497 and serine 1514.

The protein belongs to the G-protein coupled receptor 2 family. Adhesion G-protein coupled receptor (ADGR) subfamily. Forms a heterodimer, consisting of a large extracellular region (p120) non-covalently linked to a seven-transmembrane moiety (p85). Interacts with syntaxin and with proteins of the SHANK family via the PDZ domain. Isoform 2 interacts with TENM2. Interacts (via extracellular domain) with FLRT1, FLRT2 and FLRT3 (via extracellular domain). Autoproteolytically cleaved into 2 subunits, an extracellular subunit and a seven-transmembrane subunit. This proteolytic processing takes place early in the biosynthetic pathway, either in the endoplasmic reticulum or in the early compartment of the Golgi apparatus. Expressed in the brain (at protein level). Brain specific distribution but low levels are also detected in most tissues.

The protein resides in the cell membrane. It is found in the cell projection. It localises to the axon. Its subcellular location is the growth cone. The protein localises to the synapse. The protein resides in the presynaptic cell membrane. It is found in the synaptosome. Functionally, calcium-independent receptor of high affinity for alpha-latrotoxin, an excitatory neurotoxin present in black widow spider venom which triggers massive exocytosis from neurons and neuroendocrine cells. Receptor probably implicated in the regulation of exocytosis. In terms of biological role, receptor for TENM2 that mediates heterophilic synaptic cell-cell contact and postsynaptic specialization. In Rattus norvegicus (Rat), this protein is Adhesion G protein-coupled receptor L1.